The sequence spans 591 residues: Inactive metallocarboxypeptidase ECM14 (591 aa).

Residues 1–21 form the signal peptide; that stretch reads MRLFAHLAVLAILACAVPITA. Positions 22-175 are excised as a propeptide; it reads IPSFLSNSYP…QTIYESYPSS (154 aa). The Peptidase M14 domain occupies 203–523; it reads DYQPFSVIVP…NAVMVLGRFL (321 aa). Zn(2+) contacts are provided by His-265 and Glu-268. Substrate-binding positions include 265 to 268, Arg-323, and 340 to 341; these read HARE and DR. Residues Cys-334 and Cys-357 are joined by a disulfide bond. Residues Asn-350, Asn-381, and Asn-386 are each glycosylated (N-linked (GlcNAc...) asparagine). Residue His-397 coordinates Zn(2+). Position 398–399 (398–399) interacts with substrate; that stretch reads SY. Residues 533–591 are disordered; the sequence is DWEDESQRPKAGEDDIPSDNELDENDDSWIPYDYRNHDDQNEGEGYDNDEWGFRRRRKR. Composition is skewed to acidic residues over residues 546–559 and 573–582; these read DDIPSDNELDENDD and NEGEGYDNDE.

This sequence belongs to the peptidase M14 family. It depends on Zn(2+) as a cofactor.

Its subcellular location is the vacuole. It localises to the secreted. Its function is as follows. Inactive carboxypeptidase that may play a role in cell wall organization and biogenesis. This is Inactive metallocarboxypeptidase ECM14 (ECM14) from Paracoccidioides brasiliensis (strain Pb03).